Reading from the N-terminus, the 1172-residue chain is Carbamoyl phosphate synthase arginine-specific large chain, chloroplastic (1172 aa).

Polar residues predominate over residues 1–10; the sequence is MATSLSSAPT. Positions 1 to 37 are disordered; sequence MATSLSSAPTQLRPSPSPSHHRLLHRSSLLPFPRRHH. Residues 1–50 constitute a chloroplast transit peptide; it reads MATSLSSAPTQLRPSPSPSHHRLLHRSSLLPFPRRHHHRRRRCGALSIAR. The interval 72–473 is carboxyphosphate synthetic domain; sequence GRLAGVRKIM…SFQKAVRSLE (402 aa). ATP contacts are provided by Arg199, Arg240, Gly246, Gly247, Lys279, Leu281, Glu286, Gly312, Val313, His314, Gln356, and Glu370. Residues 203-399 form the ATP-grasp 1 domain; that stretch reads KQAMDRIGLK…IAKMAAKLSV (197 aa). Residues Gln356, Glu370, and Asn372 each coordinate Mg(2+). Residues 474–623 are oligomerization domain; it reads TGFAGWGCAP…YSSYEYECES (150 aa). The interval 624–1019 is carbamoyl phosphate synthetic domain; that stretch reads VPTNKKKVLI…GAFAKAQIAA (396 aa). The region spanning 761-954 is the ATP-grasp 2 domain; the sequence is NAILEELGIE…LAKYASLVMS (194 aa). Residues Arg797, Lys836, Leu838, Glu843, Gly869, Ile870, His871, Ser872, Gln912, and Glu925 each coordinate ATP. 3 residues coordinate Mg(2+): Gln912, Glu925, and Asn927. Positions 1020 to 1172 are allosteric domain; sequence GQKLPLNGTV…QNLQAAQSAS (153 aa). Residues 1021 to 1162 enclose the MGS-like domain; the sequence is QKLPLNGTVF…QDYFQTTDAS (142 aa).

The protein belongs to the CarB family. In terms of assembly, heterodimer composed of 2 chains; the small (or glutamine) chain promotes the hydrolysis of glutamine to ammonia, which is used by the large (or ammonia) chain to synthesize carbamoyl phosphate. It depends on Mg(2+) as a cofactor. The cofactor is Mn(2+).

It is found in the plastid. Its subcellular location is the chloroplast. It carries out the reaction hydrogencarbonate + L-glutamine + 2 ATP + H2O = carbamoyl phosphate + L-glutamate + 2 ADP + phosphate + 2 H(+). It catalyses the reaction hydrogencarbonate + NH4(+) + 2 ATP = carbamoyl phosphate + 2 ADP + phosphate + 2 H(+). The protein operates within amino-acid biosynthesis; L-arginine biosynthesis; carbamoyl phosphate from bicarbonate: step 1/1. Its function is as follows. Large subunit of the arginine-specific carbamoyl phosphate synthase (CPSase). CPSase catalyzes the formation of carbamoyl phosphate from the ammonia moiety of glutamine, hydrogencarbonate, and phosphate donated by ATP, constituting the first step of 2 biosynthetic pathways, one leading to arginine and/or urea and the other to pyrimidine nucleotides. The large subunit (synthetase) binds the substrates ammonia (free or transferred from glutamine from the small subunit), hydrogencarbonate and ATP and carries out an ATP-coupled ligase reaction, activating hydrogencarbonate by forming carboxy phosphate which reacts with ammonia to form carbamoyl phosphate. The sequence is that of Carbamoyl phosphate synthase arginine-specific large chain, chloroplastic (CARB) from Oryza sativa subsp. japonica (Rice).